The following is a 290-amino-acid chain: Xyloglucan endotransglucosylase/hydrolase protein 9 (290 aa).

Residues 1-26 form the signal peptide; sequence MVGMDLFKCVMMIMVLVVSCGEAVSG. Positions 27–215 constitute a GH16 domain; it reads AKFDELYRSS…WSHAPFVASY (189 aa). N-linked (GlcNAc...) asparagine glycosylation is present at N55. The Nucleophile role is filled by E101. E105 functions as the Proton donor in the catalytic mechanism. E105 lines the xyloglucan pocket. The N-linked (GlcNAc...) asparagine glycan is linked to N109. Xyloglucan is bound by residues 118–120, 128–130, 194–195, and G199; these read QTN, NRE, and DW. Cystine bridges form between C223-C234 and C271-C284. R276 is a xyloglucan binding site.

This sequence belongs to the glycosyl hydrolase 16 family. XTH group 1 subfamily. Contains at least one intrachain disulfide bond essential for its enzymatic activity. Highly expressed in shoot apices. In the vegetative and reproductive phases, it accumulates in the shoot apex region, where cell division is most active. In the reproductive phase, it is also expressed in flower buds, flower stalks and internodes bearing flowers.

Its subcellular location is the secreted. The protein resides in the cell wall. It is found in the extracellular space. The protein localises to the apoplast. The enzyme catalyses breaks a beta-(1-&gt;4) bond in the backbone of a xyloglucan and transfers the xyloglucanyl segment on to O-4 of the non-reducing terminal glucose residue of an acceptor, which can be a xyloglucan or an oligosaccharide of xyloglucan.. In terms of biological role, catalyzes xyloglucan endohydrolysis (XEH) and/or endotransglycosylation (XET). Cleaves and religates xyloglucan polymers, an essential constituent of the primary cell wall, and thereby participates in cell wall construction of growing tissues. Involved in internodal cell elongation. The polypeptide is Xyloglucan endotransglucosylase/hydrolase protein 9 (XTH9) (Arabidopsis thaliana (Mouse-ear cress)).